The chain runs to 361 residues: D-alanine--D-alanine ligase (361 aa).

The 211-residue stretch at 134–344 (KLLLKSFDIP…FKDLVDNLID (211 aa)) folds into the ATP-grasp domain. 167-222 (KEVLGYPVIVKPAVLGSSIGINVAYSENQIESFIKEALKYDLTIVIEKFIEAREIE) contacts ATP. Mg(2+)-binding residues include Asp297, Glu311, and Asn313.

This sequence belongs to the D-alanine--D-alanine ligase family. It depends on Mg(2+) as a cofactor. Mn(2+) serves as cofactor.

The protein resides in the cytoplasm. It catalyses the reaction 2 D-alanine + ATP = D-alanyl-D-alanine + ADP + phosphate + H(+). It functions in the pathway cell wall biogenesis; peptidoglycan biosynthesis. In terms of biological role, cell wall formation. The chain is D-alanine--D-alanine ligase from Borreliella burgdorferi (strain ATCC 35210 / DSM 4680 / CIP 102532 / B31) (Borrelia burgdorferi).